The following is a 175-amino-acid chain: Ribosome maturation factor RimM (175 aa).

The 74-residue stretch at serine 99–leucine 172 folds into the PRC barrel domain.

It belongs to the RimM family. In terms of assembly, binds ribosomal protein uS19.

The protein localises to the cytoplasm. An accessory protein needed during the final step in the assembly of 30S ribosomal subunit, possibly for assembly of the head region. Essential for efficient processing of 16S rRNA. May be needed both before and after RbfA during the maturation of 16S rRNA. It has affinity for free ribosomal 30S subunits but not for 70S ribosomes. The sequence is that of Ribosome maturation factor RimM from Porphyromonas gingivalis (strain ATCC BAA-308 / W83).